We begin with the raw amino-acid sequence, 109 residues long: Ribulose bisphosphate carboxylase small subunit (109 aa).

The protein belongs to the RuBisCO small chain family. As to quaternary structure, heterohexadecamer of 8 large and 8 small subunits.

The protein resides in the carboxysome. Functionally, ruBisCO catalyzes two reactions: the carboxylation of D-ribulose 1,5-bisphosphate, the primary event in carbon dioxide fixation, as well as the oxidative fragmentation of the pentose substrate in the photorespiration process. Both reactions occur simultaneously and in competition at the same active site. Although the small subunit is not catalytic it is essential for maximal activity. The chain is Ribulose bisphosphate carboxylase small subunit from Prochlorothrix hollandica.